The following is a 217-amino-acid chain: Octanoyltransferase (217 aa).

A BPL/LPL catalytic domain is found at 32 to 207; sequence DDSADEIWLV…HMIKKLNATQ (176 aa). Substrate-binding positions include 71 to 78, 138 to 140, and 151 to 153; these read RGGQVTYH, SLG, and GLA. Cys169 functions as the Acyl-thioester intermediate in the catalytic mechanism.

Belongs to the LipB family.

It is found in the cytoplasm. The catalysed reaction is octanoyl-[ACP] + L-lysyl-[protein] = N(6)-octanoyl-L-lysyl-[protein] + holo-[ACP] + H(+). Its pathway is protein modification; protein lipoylation via endogenous pathway; protein N(6)-(lipoyl)lysine from octanoyl-[acyl-carrier-protein]: step 1/2. Catalyzes the transfer of endogenously produced octanoic acid from octanoyl-acyl-carrier-protein onto the lipoyl domains of lipoate-dependent enzymes. Lipoyl-ACP can also act as a substrate although octanoyl-ACP is likely to be the physiological substrate. The polypeptide is Octanoyltransferase (Pseudoalteromonas translucida (strain TAC 125)).